Consider the following 489-residue polypeptide: Cysteine--tRNA ligase (489 aa).

Cys29 is a Zn(2+) binding site. Residues 31 to 41 (ITSYDYCHIGH) carry the 'HIGH' region motif. Zn(2+) is bound by residues Cys209, His234, and Glu238. Positions 266–270 (KMSKS) match the 'KMSKS' region motif. Residue Lys269 coordinates ATP.

It belongs to the class-I aminoacyl-tRNA synthetase family. Monomer. Requires Zn(2+) as cofactor.

It localises to the cytoplasm. The enzyme catalyses tRNA(Cys) + L-cysteine + ATP = L-cysteinyl-tRNA(Cys) + AMP + diphosphate. The chain is Cysteine--tRNA ligase from Desulfotalea psychrophila (strain LSv54 / DSM 12343).